A 305-amino-acid polypeptide reads, in one-letter code: PI protein (305 aa).

The protein belongs to the initiator RepB protein family. In terms of assembly, homodimer.

In terms of biological role, initiation for plasmid R6K DNA replication. The sequence is that of PI protein (pir) from Escherichia coli.